The following is a 273-amino-acid chain: Vacuolar membrane protein YPL162C (273 aa).

Over 1–13 the chain is Vacuolar; sequence MYVSNGKDTCQLL. The helical transmembrane segment at 14–34 threads the bilayer; sequence GPVSLFVQTLMGMTAVIVLLV. Residues 35-51 lie on the Cytoplasmic side of the membrane; that stretch reads KRNYEHPRRKMIVWSYD. Residues 52–72 form a helical membrane-spanning segment; that stretch reads IGKQIIGSLGIHFLNLGISIL. Over 73-97 the chain is Vacuolar; sequence KKRRRSLFAITAKGNDDEDQCDWYF. A helical membrane pass occupies residues 98 to 118; it reads LNLLLDTTVGIPILWLCLYII. Residues 119-156 are Cytoplasmic-facing; sequence EKVLKSLHFQNIESGNYFPSKTVGSHPRKPLFSAFVKQ. A helical transmembrane segment spans residues 157–177; sequence LLIFIVGLGVMKFCVFLILNY. Over 178–198 the chain is Vacuolar; sequence LEDLAYWFADLILGWSDSWPN. Residues 199 to 219 traverse the membrane as a helical segment; the sequence is FQVFLVMFVFPILLNCFQYFC. Topologically, residues 220-273 are cytoplasmic; the sequence is VDNVIRLHSESLTITNAENFETNTFLNDEIPDLSEVSNEVPNKDNNISSYGSII.

It localises to the vacuole membrane. The sequence is that of Vacuolar membrane protein YPL162C from Saccharomyces cerevisiae (strain ATCC 204508 / S288c) (Baker's yeast).